The primary structure comprises 130 residues: Holo-[acyl-carrier-protein] synthase (130 aa).

Mg(2+)-binding residues include D9 and E58.

The protein belongs to the P-Pant transferase superfamily. AcpS family. Mg(2+) is required as a cofactor.

The protein localises to the cytoplasm. It carries out the reaction apo-[ACP] + CoA = holo-[ACP] + adenosine 3',5'-bisphosphate + H(+). Its function is as follows. Transfers the 4'-phosphopantetheine moiety from coenzyme A to a Ser of acyl-carrier-protein. This is Holo-[acyl-carrier-protein] synthase from Mycobacterium tuberculosis (strain CDC 1551 / Oshkosh).